Consider the following 271-residue polypeptide: Formamidopyrimidine-DNA glycosylase (271 aa).

Catalysis depends on Pro-2, which acts as the Schiff-base intermediate with DNA. Glu-3 acts as the Proton donor in catalysis. Lys-57 serves as the catalytic Proton donor; for beta-elimination activity. DNA-binding residues include His-90, Arg-109, and Lys-150. The FPG-type zinc finger occupies 235-269 (LVYGNKDKPCPKCGGKIESLIIGQRNSFFCPKCQK). Arg-259 acts as the Proton donor; for delta-elimination activity in catalysis.

This sequence belongs to the FPG family. In terms of assembly, monomer. Requires Zn(2+) as cofactor.

It catalyses the reaction Hydrolysis of DNA containing ring-opened 7-methylguanine residues, releasing 2,6-diamino-4-hydroxy-5-(N-methyl)formamidopyrimidine.. The enzyme catalyses 2'-deoxyribonucleotide-(2'-deoxyribose 5'-phosphate)-2'-deoxyribonucleotide-DNA = a 3'-end 2'-deoxyribonucleotide-(2,3-dehydro-2,3-deoxyribose 5'-phosphate)-DNA + a 5'-end 5'-phospho-2'-deoxyribonucleoside-DNA + H(+). In terms of biological role, involved in base excision repair of DNA damaged by oxidation or by mutagenic agents. Acts as a DNA glycosylase that recognizes and removes damaged bases. Has a preference for oxidized purines, such as 7,8-dihydro-8-oxoguanine (8-oxoG). Has AP (apurinic/apyrimidinic) lyase activity and introduces nicks in the DNA strand. Cleaves the DNA backbone by beta-delta elimination to generate a single-strand break at the site of the removed base with both 3'- and 5'-phosphates. The sequence is that of Formamidopyrimidine-DNA glycosylase from Haemophilus influenzae (strain PittEE).